A 79-amino-acid polypeptide reads, in one-letter code: Sulfur carrier protein TusA (79 aa).

The active-site Cysteine persulfide intermediate is Cys17.

This sequence belongs to the sulfur carrier protein TusA family.

It is found in the cytoplasm. In terms of biological role, sulfur carrier protein which probably makes part of a sulfur-relay system. This chain is Sulfur carrier protein TusA, found in Haemophilus influenzae (strain PittEE).